The following is a 230-amino-acid chain: Stachydrine N-demethylase reductase subunit Stc3 (230 aa).

Belongs to the non-flavoprotein flavin reductase family. In terms of assembly, the system is probably composed of an oxygenase subunit (Stc2) and two reductase subunits (Stc3 and Stc4).

In terms of biological role, reductase involved in the catabolism of stachydrine (L-proline betaine), a source of carbon and nitrogen. Part of a Rieske-type oxygenase system that catalyzes the demethylation of stachydrine to produce N-methyl-L-proline (monomethylproline). This subunit is probably involved in the transfer of electrons from NAD(P)H to the catalytic subunit Stc2. This Rhizobium meliloti (strain 1021) (Ensifer meliloti) protein is Stachydrine N-demethylase reductase subunit Stc3.